Consider the following 317-residue polypeptide: Olfactory receptor 5AP2 (317 aa).

The Extracellular segment spans residues 1 to 32 (MVRSGKGIQNKNATEVTEFILLGLSDNPDLQG). N-linked (GlcNAc...) asparagine glycosylation occurs at asparagine 12. A helical transmembrane segment spans residues 33–53 (VLFALFLIIYTMTLVGNLGMM). Topologically, residues 54–61 (ALIKIDRS) are cytoplasmic. The helical transmembrane segment at 62-82 (LHTPMYFFLSSLSFVDASYSS) threads the bilayer. Residues 83–106 (SVTPKMLVNLMAEDKSISFNGCAT) lie on the Extracellular side of the membrane. An intrachain disulfide couples cysteine 104 to cysteine 196. A helical transmembrane segment spans residues 107 to 127 (QFFFFGSFLGTECFLLAMMAY). Topologically, residues 128–140 (DRYAAIWNPLLYP) are cytoplasmic. A helical transmembrane segment spans residues 141–161 (VLMSGRICFMLVSTSFLAGFG). Topologically, residues 162–203 (NAAIHTGMTFRLSFCGSNKINHFYCDTPPLLKLSCSDTHING) are extracellular. Residues 204 to 224 (IVIMAFSSFNVISCVLIVLIS) traverse the membrane as a helical segment. The Cytoplasmic portion of the chain corresponds to 225 to 244 (YLCILIAILKMPSAEGRHKA). A helical membrane pass occupies residues 245–265 (FSTCASHLMAVTIFFGTILFM). Over 266 to 278 (YLRPTSSYSMEQD) the chain is Extracellular. A helical membrane pass occupies residues 279-299 (KVVSVFYTVVIPMLNPLIYSL). The Cytoplasmic segment spans residues 300–317 (KNKDVKKAVKKILHNYVV).

It belongs to the G-protein coupled receptor 1 family.

It is found in the cell membrane. Odorant receptor. The protein is Olfactory receptor 5AP2 of Mus musculus (Mouse).